The chain runs to 636 residues: Chaperone protein DnaK (636 aa).

Position 203 is a phosphothreonine; by autocatalysis (Thr-203). Residues 602-636 (VYGKQQEGAPAQEEPSAEGKKADDEGTVEGEFREV) are disordered. A compositionally biased stretch (basic and acidic residues) spans 618 to 636 (AEGKKADDEGTVEGEFREV).

Belongs to the heat shock protein 70 family.

Acts as a chaperone. This chain is Chaperone protein DnaK, found in Dehalococcoides mccartyi (strain ATCC BAA-2100 / JCM 16839 / KCTC 5957 / BAV1).